Reading from the N-terminus, the 120-residue chain is Large ribosomal subunit protein uL18 (120 aa).

This sequence belongs to the universal ribosomal protein uL18 family. Part of the 50S ribosomal subunit; part of the 5S rRNA/L5/L18/L25 subcomplex. Contacts the 5S and 23S rRNAs.

Its function is as follows. This is one of the proteins that bind and probably mediate the attachment of the 5S RNA into the large ribosomal subunit, where it forms part of the central protuberance. This is Large ribosomal subunit protein uL18 from Rhizobium etli (strain CIAT 652).